The sequence spans 339 residues: Sphingolipid long chain base-responsive protein PIL1 (339 aa).

Residues 1 to 19 (MHRTYSLRNSRAPTASQLQ) show a composition bias toward polar residues. Residues 1–31 (MHRTYSLRNSRAPTASQLQNPPPPPSTTKGR) are disordered. Position 14 is a phosphothreonine (threonine 14). Residue serine 16 is modified to Phosphoserine. A Glycyl lysine isopeptide (Lys-Gly) (interchain with G-Cter in ubiquitin) cross-link involves residue lysine 29. Serine 45, serine 98, serine 163, and serine 230 each carry phosphoserine. At threonine 233 the chain carries Phosphothreonine. The segment at 273-339 (SFKQDYEDFE…SESLPQQTTA (67 aa)) is disordered. The span at 279–293 (EDFEPEEGEEEEEED) shows a compositional bias: acidic residues. The residue at position 299 (serine 299) is a Phosphoserine. A compositionally biased stretch (acidic residues) spans 301 to 318 (DEQEDGQIEEPEQEEEGA). Residues 326-339 (GHQQSESLPQQTTA) show a composition bias toward polar residues.

Phosphorylated by PKH1 and PKH2. Phosphorylation is inhibited by sphingolipid long chain bases (LCBs).

The protein localises to the lipid droplet. Its function is as follows. Negative regulator of cell wall integrity (CWI) in unstressed cells, probably by inhibiting protein kinase PKH1/PHK2 activity and regulating their downstream CWI pathways PKC1-MAP kinase pathway and protein kinase YPK1 pathway. Activity may be regulated by the transient increase of sphingolipid long chain bases (LCBs) during heat stress. In Saccharomyces cerevisiae (strain ATCC 204508 / S288c) (Baker's yeast), this protein is Sphingolipid long chain base-responsive protein PIL1 (PIL1).